We begin with the raw amino-acid sequence, 536 residues long: Aminopeptidase (536 aa).

The signal sequence occupies residues 1 to 24; sequence MSNKNNLRYALGALALSVSAASLA. The PA domain maps to 152–255; the sequence is AGDVTAKVVP…ATYDNGVAWS (104 aa). Thr-196 carries the post-translational modification Phosphothreonine. Zn(2+) contacts are provided by His-296 and Asp-308. The active-site Proton acceptor is the Glu-340. Zn(2+) is bound by residues Glu-341, Asp-369, and His-467. Cys-465 and Cys-470 are oxidised to a cystine.

The protein belongs to the peptidase M28 family. M28A subfamily. The cofactor is Zn(2+).

Its subcellular location is the secreted. The catalysed reaction is Release of an N-terminal amino acid, Xaa-|-Yaa-, in which Xaa is preferably Leu, but may be other amino acids including Pro although not Arg or Lys, and Yaa may be Pro. Amino acid amides and methyl esters are also readily hydrolyzed, but rates on arylamides are exceedingly low.. Its function is as follows. A secreted aminopeptidase. Acts on free N-terminal amino groups with a very strong preference for Leu in the first position. The protein is Aminopeptidase of Pseudomonas aeruginosa (strain UCBPP-PA14).